The following is a 1047-amino-acid chain: Probable sucrose-phosphate synthase 2 (1047 aa).

Basic and acidic residues predominate over residues 101–123 (EGKNAKREAKREREREKARREVT). The disordered stretch occupies residues 101–153 (EGKNAKREAKREREREKARREVTAEMSEDFSEGEKADLPGEIPTPSDNNTKGR). Phosphoserine is present on residues Ser-127, Ser-131, and Ser-159. Residues 712 to 731 (KSGSNNGVDTNLDAEDRAAE) are disordered.

Belongs to the glycosyltransferase 1 family. As to quaternary structure, homodimer or homotetramer. In terms of tissue distribution, expressed in roots, cauline leaves, flower buds, flowers and anthers. Highly expressed in maturing nectaries.

It carries out the reaction beta-D-fructose 6-phosphate + UDP-alpha-D-glucose = sucrose 6(F)-phosphate + UDP + H(+). It participates in glycan biosynthesis; sucrose biosynthesis; sucrose from D-fructose 6-phosphate and UDP-alpha-D-glucose: step 1/2. With respect to regulation, activity is regulated by phosphorylation and moderated by concentration of metabolites and light. Plays a role in photosynthetic sucrose synthesis by catalyzing the rate-limiting step of sucrose biosynthesis from UDP-glucose and fructose- 6-phosphate. Involved in the regulation of carbon partitioning in the leaves of plants. May regulate the synthesis of sucrose and therefore play a major role as a limiting factor in the export of photoassimilates out of the leaf. Plays a role for sucrose availability that is essential for plant growth and fiber elongation. Required for nectar secretion. The sequence is that of Probable sucrose-phosphate synthase 2 (SPS2) from Arabidopsis thaliana (Mouse-ear cress).